The primary structure comprises 470 residues: BTB/POZ domain-containing protein 17 (470 aa).

Positions 1 to 18 (MRMKGLYVVPLLLALVES) are cleaved as a signal peptide. The region spanning 53-122 (SDTTLRIRTA…FYCGEISVNL (70 aa)) is the BTB domain. In terms of domain architecture, BACK spans 161–261 (VVSWYHYALR…ITPSQLFQIQ (101 aa)).

It is found in the secreted. The chain is BTB/POZ domain-containing protein 17 (btbd17) from Xenopus laevis (African clawed frog).